The chain runs to 270 residues: Shikimate dehydrogenase (NADP(+)) (270 aa).

Residues 15–17 and Thr62 each bind shikimate; that span reads SLS. Catalysis depends on Lys66, which acts as the Proton acceptor. Shikimate is bound by residues Asn87 and Asp102. Residues 126–130, 149–154, and Ile210 contribute to the NADP(+) site; these read GAGGS and NRTVGR. Tyr212 serves as a coordination point for shikimate. Gly233 serves as a coordination point for NADP(+).

The protein belongs to the shikimate dehydrogenase family. In terms of assembly, homodimer.

It carries out the reaction shikimate + NADP(+) = 3-dehydroshikimate + NADPH + H(+). It functions in the pathway metabolic intermediate biosynthesis; chorismate biosynthesis; chorismate from D-erythrose 4-phosphate and phosphoenolpyruvate: step 4/7. Involved in the biosynthesis of the chorismate, which leads to the biosynthesis of aromatic amino acids. Catalyzes the reversible NADPH linked reduction of 3-dehydroshikimate (DHSA) to yield shikimate (SA). The chain is Shikimate dehydrogenase (NADP(+)) from Hyphomonas neptunium (strain ATCC 15444).